The chain runs to 138 residues: Superoxide dismutase [Mn] (138 aa).

Mn(2+) contacts are provided by Gln1, His49, Asp133, and His137.

It belongs to the iron/manganese superoxide dismutase family. The cofactor is Mn(2+).

The enzyme catalyses 2 superoxide + 2 H(+) = H2O2 + O2. Destroys superoxide anion radicals which are normally produced within the cells and which are toxic to biological systems. The sequence is that of Superoxide dismutase [Mn] (sodA) from Mycobacteroides chelonae (Mycobacterium chelonae).